The following is a 256-amino-acid chain: Ribosomal RNA small subunit methyltransferase A (256 aa).

S-adenosyl-L-methionine contacts are provided by His12, Leu14, Gly39, Glu60, Asp83, and Asn101.

Belongs to the class I-like SAM-binding methyltransferase superfamily. rRNA adenine N(6)-methyltransferase family. RsmA subfamily.

It is found in the cytoplasm. The enzyme catalyses adenosine(1518)/adenosine(1519) in 16S rRNA + 4 S-adenosyl-L-methionine = N(6)-dimethyladenosine(1518)/N(6)-dimethyladenosine(1519) in 16S rRNA + 4 S-adenosyl-L-homocysteine + 4 H(+). Specifically dimethylates two adjacent adenosines (A1518 and A1519) in the loop of a conserved hairpin near the 3'-end of 16S rRNA in the 30S particle. May play a critical role in biogenesis of 30S subunits. This is Ribosomal RNA small subunit methyltransferase A from Nitrosomonas eutropha (strain DSM 101675 / C91 / Nm57).